Reading from the N-terminus, the 114-residue chain is 11.9 kDa wall protein (114 aa).

The propeptide occupies 1-6; sequence MSFKTR.

The protein localises to the secreted. It is found in the cell wall. Its function is as follows. May play a role in the structure of the hypha-forming fruit bodies. This chain is 11.9 kDa wall protein (TDF-1), found in Tuber dryophilum (Truffle).